A 651-amino-acid polypeptide reads, in one-letter code: DNA mismatch repair protein MutL (651 aa).

The protein belongs to the DNA mismatch repair MutL/HexB family.

This protein is involved in the repair of mismatches in DNA. It is required for dam-dependent methyl-directed DNA mismatch repair. May act as a 'molecular matchmaker', a protein that promotes the formation of a stable complex between two or more DNA-binding proteins in an ATP-dependent manner without itself being part of a final effector complex. The chain is DNA mismatch repair protein MutL from Streptococcus mutans serotype c (strain ATCC 700610 / UA159).